Reading from the N-terminus, the 78-residue chain is Translational regulator CsrA (78 aa).

Belongs to the CsrA/RsmA family. As to quaternary structure, homodimer; the beta-strands of each monomer intercalate to form a hydrophobic core, while the alpha-helices form wings that extend away from the core.

It is found in the cytoplasm. A translational regulator that binds mRNA to regulate translation initiation and/or mRNA stability. Usually binds in the 5'-UTR at or near the Shine-Dalgarno sequence preventing ribosome-binding, thus repressing translation. Its main target seems to be the major flagellin gene, while its function is anatagonized by FliW. This is Translational regulator CsrA from Borrelia turicatae (strain 91E135).